The chain runs to 183 residues: ATP-dependent protease subunit HslV (183 aa).

The active site involves T10. Na(+) contacts are provided by A164, C167, and T170.

This sequence belongs to the peptidase T1B family. HslV subfamily. A double ring-shaped homohexamer of HslV is capped on each side by a ring-shaped HslU homohexamer. The assembly of the HslU/HslV complex is dependent on binding of ATP.

It is found in the cytoplasm. The enzyme catalyses ATP-dependent cleavage of peptide bonds with broad specificity.. Its activity is regulated as follows. Allosterically activated by HslU binding. In terms of biological role, protease subunit of a proteasome-like degradation complex believed to be a general protein degrading machinery. The polypeptide is ATP-dependent protease subunit HslV (Rhizorhabdus wittichii (strain DSM 6014 / CCUG 31198 / JCM 15750 / NBRC 105917 / EY 4224 / RW1) (Sphingomonas wittichii)).